A 227-amino-acid polypeptide reads, in one-letter code: Neuromodulin (227 aa).

Positions 1–227 (MLCCMRRTKQ…EDPEADQEHA (227 aa)) are disordered. Residues Cys-3 and Cys-4 are each lipidated (S-palmitoyl cysteine). Over residues 9–32 (KQVEKNDEDQKIEQDGVKPEDKAH) the composition is skewed to basic and acidic residues. Residues 31-60 (AHKAATKIQASFRGHITRKKLKGEKKGDAP) enclose the IQ domain. A Phosphoserine; by PHK modification is found at Ser-41. Residues 54-84 (EKKGDAPAAEAEAKEKDDAPVADGVEKKEGD) show a composition bias toward basic and acidic residues. The segment covering 85–97 (GSATTDAAPATSP) has biased composition (low complexity). Ser-86 and Ser-96 each carry phosphoserine. A compositionally biased stretch (basic and acidic residues) spans 98-127 (KAEEPSKAGDAPSEEKKGEGDAAPSEEKAG). Low complexity predominate over residues 128–139 (SAETESAAKATT). At Thr-138 the chain carries Phosphothreonine. Ser-142, Ser-144, and Ser-145 each carry phosphoserine. The span at 146–158 (KAEDGPAKEEPKQ) shows a compositional bias: basic and acidic residues. Over residues 159–193 (ADVPAAVTDAAATTPAAEDAATKAAQPPTETAESS) the composition is skewed to low complexity. The residue at position 172 (Thr-172) is a Phosphothreonine. Ser-192 and Ser-193 each carry phosphoserine; by CK2. Over residues 202–215 (VDEAKPKESARQDE) the composition is skewed to basic and acidic residues. A compositionally biased stretch (acidic residues) spans 216 to 227 (GKEDPEADQEHA).

The protein belongs to the neuromodulin family. As to quaternary structure, identified in a complex containing FGFR4, NCAM1, CDH2, PLCG1, FRS2, SRC, SHC1, GAP43 and CTTN. Interacts (via IQ domain) with calmodulin. Binds calmodulin with a greater affinity in the absence of Ca(2+) than in its presence. Phosphorylated. Phosphorylation of this protein by a protein kinase C is specifically correlated with certain forms of synaptic plasticity. In terms of processing, palmitoylated by ZDHHC3. Palmitoylation is regulated by ARF6 and is essential for plasma membrane association and axonal and dendritic filopodia induction. Deacylated by LYPLA2. Expressed in the hippocampus (at protein level). Expressed in the dorsal root ganglion and the spinal cord (at protein level).

It localises to the cell membrane. The protein resides in the cell projection. Its subcellular location is the growth cone membrane. It is found in the synapse. The protein localises to the filopodium membrane. It localises to the perikaryon. The protein resides in the dendrite. Its subcellular location is the axon. It is found in the cytoplasm. Functionally, this protein is associated with nerve growth. It is a major component of the motile 'growth cones' that form the tips of elongating axons. Plays a role in axonal and dendritic filopodia induction. The protein is Neuromodulin (Gap43) of Mus musculus (Mouse).